We begin with the raw amino-acid sequence, 296 residues long: 4-hydroxybenzoate octaprenyltransferase (296 aa).

8 consecutive transmembrane segments (helical) span residues 29–49 (IGIY…ADGV), 55–75 (LLIF…INDF), 102–122 (AWIT…LTNA), 146–166 (YYPQ…AFTA), 169–189 (GELP…TVAY), 219–239 (LIIG…GSRF), 241–261 (LGLY…WEAW), and 275–295 (FLHN…DYAL).

This sequence belongs to the UbiA prenyltransferase family. Mg(2+) serves as cofactor.

It localises to the cell inner membrane. The enzyme catalyses all-trans-octaprenyl diphosphate + 4-hydroxybenzoate = 4-hydroxy-3-(all-trans-octaprenyl)benzoate + diphosphate. The protein operates within cofactor biosynthesis; ubiquinone biosynthesis. Functionally, catalyzes the prenylation of para-hydroxybenzoate (PHB) with an all-trans polyprenyl group. Mediates the second step in the final reaction sequence of ubiquinone-8 (UQ-8) biosynthesis, which is the condensation of the polyisoprenoid side chain with PHB, generating the first membrane-bound Q intermediate 3-octaprenyl-4-hydroxybenzoate. The protein is 4-hydroxybenzoate octaprenyltransferase of Pseudomonas aeruginosa (strain UCBPP-PA14).